A 120-amino-acid chain; its full sequence is Immunoglobulin kappa variable 2-24 (120 aa).

Positions 1–19 are cleaved as a signal peptide; it reads MRLLAQLLGLLMLWVPGSS. An Ig-like domain is found at 20–120; the sequence is GDIVMTQTPL…YYCMQATQFP (101 aa). The segment at 21–43 is framework-1; sequence DIVMTQTPLSSPVTLGQPASISC. A disulfide bond links cysteine 43 and cysteine 113. The tract at residues 44–59 is complementarity-determining-1; sequence RSSQSLVHSDGNTYLS. Residues 60–74 are framework-2; sequence WLQQRPGQPPRLLIY. Residues 75–81 are complementarity-determining-2; it reads KISNRFS. The tract at residues 82–113 is framework-3; that stretch reads GVPDRFSGSGAGTDFTLKISRVEAEDVGVYYC. Positions 114 to 120 are complementarity-determining-3; the sequence is MQATQFP.

Immunoglobulins are composed of two identical heavy chains and two identical light chains; disulfide-linked.

It is found in the secreted. The protein resides in the cell membrane. Functionally, v region of the variable domain of immunoglobulin light chains that participates in the antigen recognition. Immunoglobulins, also known as antibodies, are membrane-bound or secreted glycoproteins produced by B lymphocytes. In the recognition phase of humoral immunity, the membrane-bound immunoglobulins serve as receptors which, upon binding of a specific antigen, trigger the clonal expansion and differentiation of B lymphocytes into immunoglobulins-secreting plasma cells. Secreted immunoglobulins mediate the effector phase of humoral immunity, which results in the elimination of bound antigens. The antigen binding site is formed by the variable domain of one heavy chain, together with that of its associated light chain. Thus, each immunoglobulin has two antigen binding sites with remarkable affinity for a particular antigen. The variable domains are assembled by a process called V-(D)-J rearrangement and can then be subjected to somatic hypermutations which, after exposure to antigen and selection, allow affinity maturation for a particular antigen. The protein is Immunoglobulin kappa variable 2-24 of Homo sapiens (Human).